Reading from the N-terminus, the 794-residue chain is Zinc finger protein 148 (794 aa).

Lys-6 is covalently cross-linked (Glycyl lysine isopeptide (Lys-Gly) (interchain with G-Cter in SUMO2)). Ser-51 is subject to Phosphoserine. Glycyl lysine isopeptide (Lys-Gly) (interchain with G-Cter in SUMO2) cross-links involve residues Lys-88, Lys-115, and Lys-132. A C2H2-type 1 zinc finger spans residues 171–193 (HVCEHCNAAFRTNYHLQRHVFIH). Position 194 is a phosphothreonine (Thr-194). C2H2-type zinc fingers lie at residues 199–221 (FQCS…EKIH) and 227–249 (FRCD…KRTH). Position 250 is a phosphoserine (Ser-250). Residues 255-278 (YQCEYCLQYFSRTDRVLKHKRMCH) form a C2H2-type 4 zinc finger. Lys-291 is covalently cross-linked (Glycyl lysine isopeptide (Lys-Gly) (interchain with G-Cter in SUMO2)). A disordered region spans residues 298-336 (EEDSGFSTSPKDNSLPKKKRQKTEKKSSGMDKESALDKS). Residues Ser-301 and Ser-306 each carry the phosphoserine modification. A Glycyl lysine isopeptide (Lys-Gly) (interchain with G-Cter in SUMO2) cross-link involves residue Lys-308. The segment covering 321–336 (EKKSSGMDKESALDKS) has biased composition (basic and acidic residues). Residue Lys-356 forms a Glycyl lysine isopeptide (Lys-Gly) (interchain with G-Cter in SUMO1); alternate linkage. Lys-356 participates in a covalent cross-link: Glycyl lysine isopeptide (Lys-Gly) (interchain with G-Cter in SUMO2); alternate. A Glycyl lysine isopeptide (Lys-Gly) (interchain with G-Cter in SUMO2) cross-link involves residue Lys-402. The residue at position 412 (Ser-412) is a Phosphoserine. Glycyl lysine isopeptide (Lys-Gly) (interchain with G-Cter in SUMO2) cross-links involve residues Lys-421 and Lys-424. Over residues 574–588 (NSSEVPEVTPSENVG) the composition is skewed to polar residues. The tract at residues 574–596 (NSSEVPEVTPSENVGSSSQASSS) is disordered. The residue at position 607 (Lys-607) is an N6-acetyllysine. Residues Ser-665 and Ser-784 each carry the phosphoserine modification.

The protein belongs to the krueppel C2H2-type zinc-finger protein family. In terms of assembly, interacts with HNRNPDL. Interacts with the 5FMC complex; the interaction requires association with CHTOP. Interacts with CAVIN1. In terms of processing, sumoylated with SUMO2. Desumoylated by SENP3, resulting in the stimulation of transcription of its target genes.

The protein resides in the nucleus. In terms of biological role, involved in transcriptional regulation. Represses the transcription of a number of genes including gastrin, stromelysin and enolase. Binds to the G-rich box in the enhancer region of these genes. This is Zinc finger protein 148 (ZNF148) from Homo sapiens (Human).